Reading from the N-terminus, the 729-residue chain is Fatty acid oxidation complex subunit alpha (729 aa).

Positions 1–189 (MLYKGDTLYL…KIGLVDGVVK (189 aa)) are enoyl-CoA hydratase/isomerase. Residue Asp-296 participates in substrate binding. The tract at residues 311-729 (ETPKQAAVLG…ARPVGDLKTA (419 aa)) is 3-hydroxyacyl-CoA dehydrogenase. NAD(+) contacts are provided by residues Met-324, Asp-343, 400 to 402 (VVE), Lys-407, and Ser-429. His-450 functions as the For 3-hydroxyacyl-CoA dehydrogenase activity in the catalytic mechanism. Position 453 (Asn-453) interacts with NAD(+). Residues Asn-500 and Tyr-660 each coordinate substrate. Positions 708–729 (RHNEPYYPPVEPARPVGDLKTA) are disordered.

In the N-terminal section; belongs to the enoyl-CoA hydratase/isomerase family. The protein in the C-terminal section; belongs to the 3-hydroxyacyl-CoA dehydrogenase family. As to quaternary structure, heterotetramer of two alpha chains (FadB) and two beta chains (FadA).

It carries out the reaction a (3S)-3-hydroxyacyl-CoA + NAD(+) = a 3-oxoacyl-CoA + NADH + H(+). The catalysed reaction is a (3S)-3-hydroxyacyl-CoA = a (2E)-enoyl-CoA + H2O. The enzyme catalyses a 4-saturated-(3S)-3-hydroxyacyl-CoA = a (3E)-enoyl-CoA + H2O. It catalyses the reaction (3S)-3-hydroxybutanoyl-CoA = (3R)-3-hydroxybutanoyl-CoA. It carries out the reaction a (3Z)-enoyl-CoA = a 4-saturated (2E)-enoyl-CoA. The catalysed reaction is a (3E)-enoyl-CoA = a 4-saturated (2E)-enoyl-CoA. It functions in the pathway lipid metabolism; fatty acid beta-oxidation. Its function is as follows. Involved in the aerobic and anaerobic degradation of long-chain fatty acids via beta-oxidation cycle. Catalyzes the formation of 3-oxoacyl-CoA from enoyl-CoA via L-3-hydroxyacyl-CoA. It can also use D-3-hydroxyacyl-CoA and cis-3-enoyl-CoA as substrate. This chain is Fatty acid oxidation complex subunit alpha, found in Escherichia coli (strain SMS-3-5 / SECEC).